Here is a 205-residue protein sequence, read N- to C-terminus: High frequency lysogenization protein HflD homolog (205 aa).

This sequence belongs to the HflD family.

It is found in the cytoplasm. It localises to the cell inner membrane. The chain is High frequency lysogenization protein HflD homolog from Aliivibrio fischeri (strain MJ11) (Vibrio fischeri).